A 467-amino-acid chain; its full sequence is ATP-dependent protease ATPase subunit HslU (467 aa).

Residues valine 22 and 64–69 each bind ATP; that span reads GVGKTE. The disordered stretch occupies residues 166–185; the sequence is GQNQDEEEEPPTEEIKTKRS. ATP contacts are provided by aspartate 280, glutamate 345, and arginine 417.

Belongs to the ClpX chaperone family. HslU subfamily. A double ring-shaped homohexamer of HslV is capped on each side by a ring-shaped HslU homohexamer. The assembly of the HslU/HslV complex is dependent on binding of ATP.

The protein resides in the cytoplasm. Its function is as follows. ATPase subunit of a proteasome-like degradation complex; this subunit has chaperone activity. The binding of ATP and its subsequent hydrolysis by HslU are essential for unfolding of protein substrates subsequently hydrolyzed by HslV. HslU recognizes the N-terminal part of its protein substrates and unfolds these before they are guided to HslV for hydrolysis. This Staphylococcus epidermidis (strain ATCC 35984 / DSM 28319 / BCRC 17069 / CCUG 31568 / BM 3577 / RP62A) protein is ATP-dependent protease ATPase subunit HslU.